The sequence spans 366 residues: Chorismate synthase (366 aa).

R48 serves as a coordination point for NADP(+). FMN contacts are provided by residues 125–127 (RSS), 238–239 (NA), G278, 293–297 (KPTSS), and R319.

It belongs to the chorismate synthase family. As to quaternary structure, homotetramer. FMNH2 is required as a cofactor.

It catalyses the reaction 5-O-(1-carboxyvinyl)-3-phosphoshikimate = chorismate + phosphate. It participates in metabolic intermediate biosynthesis; chorismate biosynthesis; chorismate from D-erythrose 4-phosphate and phosphoenolpyruvate: step 7/7. Catalyzes the anti-1,4-elimination of the C-3 phosphate and the C-6 proR hydrogen from 5-enolpyruvylshikimate-3-phosphate (EPSP) to yield chorismate, which is the branch point compound that serves as the starting substrate for the three terminal pathways of aromatic amino acid biosynthesis. This reaction introduces a second double bond into the aromatic ring system. The protein is Chorismate synthase of Hydrogenovibrio crunogenus (strain DSM 25203 / XCL-2) (Thiomicrospira crunogena).